The primary structure comprises 545 residues: High-molecular-weight cytochrome c (545 aa).

The N-terminal stretch at 1 to 31 (MRNGRTLLRWAGVLAATAIIGVGGFWSQGTT) is a signal peptide. Residues His-66, His-69, Cys-80, Cys-83, His-84, His-111, Cys-114, Cys-117, His-118, Cys-135, Cys-138, His-139, His-159, His-162, Cys-178, Cys-181, His-182, His-183, Cys-202, Cys-205, His-206, His-222, Cys-225, Cys-228, His-229, Cys-244, Cys-247, His-248, His-298, His-301, Cys-308, Cys-311, His-312, His-313, Cys-319, Cys-322, His-323, His-341, Cys-349, Cys-352, His-353, Cys-362, Cys-365, His-366, Cys-378, Cys-381, His-382, His-449, His-470, Cys-477, Cys-480, His-481, His-482, Cys-493, Cys-496, His-497, His-516, Cys-519, Cys-522, His-523, Cys-536, Cys-539, and His-540 each contribute to the heme c site.

Monomer. Post-translationally, binds 16 heme c groups per subunit. High-spin heme 15 has single axial histidine ligand and the other hemes are low-spin bis-histidinyl coordinated.

The protein localises to the periplasm. HMWC (high-molecular-weight cytochrome c), ORF2, ORF3, ORF4, ORF5 and ORF6 in the HMC operon form a transmembrane protein complex that allows electron flow from the periplasmic hydrogenase to the cytoplasmic enzymes that catalyze reduction of sulfates. The sequence is that of High-molecular-weight cytochrome c (hmcA) from Nitratidesulfovibrio vulgaris (strain ATCC 29579 / DSM 644 / CCUG 34227 / NCIMB 8303 / VKM B-1760 / Hildenborough) (Desulfovibrio vulgaris).